We begin with the raw amino-acid sequence, 158 residues long: Phosphopantetheine adenylyltransferase (158 aa).

Thr-10 contributes to the substrate binding site. ATP-binding positions include 10-11 and His-18; that span reads TF. Substrate-binding residues include Lys-42, Leu-74, and Arg-88. Residues 89–91, Glu-99, and 124–130 contribute to the ATP site; these read GIR and WRYLSST.

It belongs to the bacterial CoaD family. As to quaternary structure, homohexamer. Mg(2+) serves as cofactor.

Its subcellular location is the cytoplasm. The enzyme catalyses (R)-4'-phosphopantetheine + ATP + H(+) = 3'-dephospho-CoA + diphosphate. It functions in the pathway cofactor biosynthesis; coenzyme A biosynthesis; CoA from (R)-pantothenate: step 4/5. Functionally, reversibly transfers an adenylyl group from ATP to 4'-phosphopantetheine, yielding dephospho-CoA (dPCoA) and pyrophosphate. This chain is Phosphopantetheine adenylyltransferase, found in Actinobacillus pleuropneumoniae serotype 7 (strain AP76).